Consider the following 424-residue polypeptide: Phosphomethylpyrimidine synthase (424 aa).

Substrate-binding positions include M94, Y123, H162, 184-186 (SRG), 225-228 (NGMR), and E264. H268 lines the Zn(2+) pocket. Residue Y291 coordinates substrate. H332 is a binding site for Zn(2+). The [4Fe-4S] cluster site is built by C406, C409, and C413.

This sequence belongs to the ThiC family. Requires [4Fe-4S] cluster as cofactor.

The enzyme catalyses 5-amino-1-(5-phospho-beta-D-ribosyl)imidazole + S-adenosyl-L-methionine = 4-amino-2-methyl-5-(phosphooxymethyl)pyrimidine + CO + 5'-deoxyadenosine + formate + L-methionine + 3 H(+). It participates in cofactor biosynthesis; thiamine diphosphate biosynthesis. Catalyzes the synthesis of the hydroxymethylpyrimidine phosphate (HMP-P) moiety of thiamine from aminoimidazole ribotide (AIR) in a radical S-adenosyl-L-methionine (SAM)-dependent reaction. The protein is Phosphomethylpyrimidine synthase of Methanoculleus marisnigri (strain ATCC 35101 / DSM 1498 / JR1).